The following is a 181-amino-acid chain: Adenylate kinase (181 aa).

10 to 15 contributes to the ATP binding site; that stretch reads GAGKGT. An NMP region spans residues 30–59; it reads STGDLFRANIGEGTPLGLEAKSYIDAGKLV. AMP-binding positions include threonine 31, arginine 36, 57–59, 85–88, and glutamine 92; these read KLV and GFPR. Positions 126–132 are LID; it reads ARGRADD. Arginine 127 is an ATP binding site. 2 residues coordinate AMP: arginine 129 and arginine 140. Residue glycine 166 coordinates ATP.

The protein belongs to the adenylate kinase family. As to quaternary structure, monomer.

The protein resides in the cytoplasm. It carries out the reaction AMP + ATP = 2 ADP. The protein operates within purine metabolism; AMP biosynthesis via salvage pathway; AMP from ADP: step 1/1. Catalyzes the reversible transfer of the terminal phosphate group between ATP and AMP. Plays an important role in cellular energy homeostasis and in adenine nucleotide metabolism. The sequence is that of Adenylate kinase from Corynebacterium aurimucosum (strain ATCC 700975 / DSM 44827 / CIP 107346 / CN-1) (Corynebacterium nigricans).